The primary structure comprises 293 residues: 4-diphosphocytidyl-2-C-methyl-D-erythritol kinase (293 aa).

Lysine 11 is an active-site residue. 96 to 106 (PVAAGLGGGSS) contacts ATP. Aspartate 138 is a catalytic residue.

The protein belongs to the GHMP kinase family. IspE subfamily.

It catalyses the reaction 4-CDP-2-C-methyl-D-erythritol + ATP = 4-CDP-2-C-methyl-D-erythritol 2-phosphate + ADP + H(+). It participates in isoprenoid biosynthesis; isopentenyl diphosphate biosynthesis via DXP pathway; isopentenyl diphosphate from 1-deoxy-D-xylulose 5-phosphate: step 3/6. Its function is as follows. Catalyzes the phosphorylation of the position 2 hydroxy group of 4-diphosphocytidyl-2C-methyl-D-erythritol. In Xanthobacter autotrophicus (strain ATCC BAA-1158 / Py2), this protein is 4-diphosphocytidyl-2-C-methyl-D-erythritol kinase.